The sequence spans 94 residues: MSRPRIGAAAAITQLEGWAIAPNHKDAIVKTFRFDDFNQAFGFMTRVALMADKLDHHPEWFNVYNRVEVLLTTHDADGVTDLDLTLAKFMDSAA.

The protein belongs to the pterin-4-alpha-carbinolamine dehydratase family.

The enzyme catalyses (4aS,6R)-4a-hydroxy-L-erythro-5,6,7,8-tetrahydrobiopterin = (6R)-L-erythro-6,7-dihydrobiopterin + H2O. This is Putative pterin-4-alpha-carbinolamine dehydratase from Caulobacter vibrioides (strain ATCC 19089 / CIP 103742 / CB 15) (Caulobacter crescentus).